A 430-amino-acid chain; its full sequence is MPYIVDVYAREVLDSRGNPTVEVEVYTETGAFGRALVPSGASTGEYEAVELRDGDKDRYLGKGVLTAVNNVNEIIAPELLGFDVTEQNAIDQLLIELDGTENKGKLGANAILGVSMACARAAADFLQIPLYQYLGGFNSKTLPVPMMNIVNGGEHADNNVDIQEFMIMPVGAPNFREALRMGAQIFHSLKSVLSAKGLNTAVGDEGGFAPNLGSNEEALQTIVEAIEKAGFKPGEEVKLAMDAASSEFYNKEDGKYHLSGEGVVKTSAEMVDWYEELVSKYPIISIEDGLDENDWEGHKLLTERLGKKVQLVGDDLFVTNTKKLSEGIKNGVGNSILIKVNQIGTLTETFDAIEMAKRAGYTAVISHRSGETEDSTIADIAVATNAGQIKTGAPSRTDRVAKYNQLLRIEDQLAETAQYHGINSFYNLNK.

Residues 1–140 (MPYIVDVYAR…YQYLGGFNSK (140 aa)) are sufficient for secretion. Thr-141 is modified (phosphothreonine). Gln-163 lines the (2R)-2-phosphoglycerate pocket. The active-site Proton donor is Glu-205. Residue Asp-242 coordinates Mg(2+). Phosphoserine is present on Ser-259. Position 281 is a phosphotyrosine (Tyr-281). Mg(2+) contacts are provided by Glu-287 and Asp-314. Phosphoserine is present on Ser-325. (2R)-2-phosphoglycerate-binding residues include Lys-339, Arg-368, Ser-369, and Lys-390. Lys-339 serves as the catalytic Proton acceptor.

This sequence belongs to the enolase family. In terms of assembly, homooctamer. Component of the RNA degradosome complex composed of rny, rnjA, rnjB, pnp, pfkA and eno (although rnjA and rnjB's presence is controversial). Mg(2+) is required as a cofactor. In terms of processing, phosphorylated during sporulation.

It is found in the cytoplasm. Its subcellular location is the secreted. The protein localises to the cell surface. It catalyses the reaction (2R)-2-phosphoglycerate = phosphoenolpyruvate + H2O. The protein operates within carbohydrate degradation; glycolysis; pyruvate from D-glyceraldehyde 3-phosphate: step 4/5. With respect to regulation, covalent binding to the substrate (probably 2-PG) at Lys-339 of a small fraction of enolase causes inactivation of the enzyme, and possibly serves as a signal for the export of the protein. Citrate acts as a non-competitive inhibitor for both forward and reverse reactions, probably by chelating Mg(2+). Catalyzes the reversible conversion of 2-phosphoglycerate (2-PG) into phosphoenolpyruvate (PEP). It is essential for the degradation of carbohydrates via glycolysis. Functionally, a component of the RNA degradosome, a multi-enzyme complex involved in RNA processing and messenger RNA degradation. The polypeptide is Enolase (Bacillus subtilis (strain 168)).